Reading from the N-terminus, the 396-residue chain is Gamma-D-glutamyl-L-diamino acid endopeptidase 1 (396 aa).

LysM domains follow at residues 1–45 and 51–95; these read MDIL…RIQI and TSYT…TIQV. Residues 108 to 394 enclose the Peptidase M14 domain; it reads QNYDYSMMMN…EALGIFLAGL (287 aa). Zn(2+)-binding residues include H162 and E165. Residue D255 participates in substrate binding. Zn(2+) is bound at residue H307. Y347 serves as the catalytic Proton donor. The Proton donor/acceptor role is filled by E366.

It belongs to the peptidase M14 family. Requires Zn(2+) as cofactor.

It catalyses the reaction Hydrolysis of gamma-D-glutamyl bonds to the L-terminus (position 7) of meso-diaminopimelic acid (meso-A2pm) in 7-(L-Ala-gamma-D-Glu)-meso-A2pm and 7-(L-Ala-gamma-D-Glu)-7-(D-Ala)-meso-A2pm. It is required that the D-terminal amino and carboxy groups of meso-A2pm are unsubstituted.. In terms of biological role, an endopeptidase which hydrolyzes the gamma-D-Glu-(L)meso-diaminopimelic acid bond of L-Ala-gamma-D-Glu-(L)meso-diaminopimelic acid and L-Ala-gamma-D-Glu-(L)meso-diaminopimelic acid(L)-D-Ala peptides. It is active on spore cortex peptidoglycan. The sequence is that of Gamma-D-glutamyl-L-diamino acid endopeptidase 1 from Lysinibacillus sphaericus (Bacillus sphaericus).